Here is a 248-residue protein sequence, read N- to C-terminus: DNA repair protein RecO (248 aa).

Belongs to the RecO family.

In terms of biological role, involved in DNA repair and RecF pathway recombination. In Bradyrhizobium sp. (strain BTAi1 / ATCC BAA-1182), this protein is DNA repair protein RecO.